A 699-amino-acid chain; its full sequence is Conditioned medium factor (699 aa).

A signal peptide spans 1 to 18; it reads MRLLLLLILIITINFSYG. 4 N-linked (GlcNAc...) asparagine glycosylation sites follow: asparagine 130, asparagine 283, asparagine 346, and asparagine 430. Positions 680–699 are disordered; it reads SPQQTTNTEYNKEMSSNSVW.

N- and O-glycosylated. Post-translationally, the N-terminus is blocked.

Its function is as follows. Involved in cell density sensing and might synchronize the onset of development by triggering aggregation when a majority of the cells in a given area have starved. This chain is Conditioned medium factor (cmfA), found in Dictyostelium discoideum (Social amoeba).